The chain runs to 267 residues: NAD kinase 2 (267 aa).

Catalysis depends on Asp-50, which acts as the Proton acceptor. Residues 50-51, Lys-55, 122-123, Arg-149, Asp-151, 162-167, and Ala-186 contribute to the NAD(+) site; these read DG, NE, and TAYNKS.

It belongs to the NAD kinase family. It depends on a divalent metal cation as a cofactor.

The protein resides in the cytoplasm. The catalysed reaction is NAD(+) + ATP = ADP + NADP(+) + H(+). In terms of biological role, involved in the regulation of the intracellular balance of NAD and NADP, and is a key enzyme in the biosynthesis of NADP. Catalyzes specifically the phosphorylation on 2'-hydroxyl of the adenosine moiety of NAD to yield NADP. The sequence is that of NAD kinase 2 from Listeria monocytogenes serovar 1/2a (strain ATCC BAA-679 / EGD-e).